Reading from the N-terminus, the 101-residue chain is Apolipoprotein C-II (101 aa).

Positions 1–22 (MGIRYLLVLVLVLLVLGCEVQG) are cleaved as a signal peptide. The lipid binding stretch occupies residues 66 to 74 (TMDEKIREI). Residues 78–101 (STAAVSTYAGIFTDQLLSMLKGDQ) form a lipoprotein lipase cofactor region.

The protein belongs to the apolipoprotein C2 family. In terms of processing, proapolipoprotein C-II is synthesized as a sialic acid containing glycoprotein which is subsequently desialylated prior to its proteolytic processing. Proapolipoprotein C-II, the major form found in plasma undergoes proteolytic cleavage of its N-terminal hexapeptide to generate apolipoprotein C-II, which occurs as the minor form in plasma.

The protein localises to the secreted. Its function is as follows. Component of chylomicrons, very low-density lipoproteins (VLDL), low-density lipoproteins (LDL), and high-density lipoproteins (HDL) in plasma. Plays an important role in lipoprotein metabolism as an activator of lipoprotein lipase. Both proapolipoprotein C-II and apolipoprotein C-II can activate lipoprotein lipase. The polypeptide is Apolipoprotein C-II (APOC2) (Leptonychotes weddellii (Weddell seal)).